The following is a 205-amino-acid chain: MEINYELYLITDRRFLKGRQLKKVVEDAILGGVTIVQVREKDVSTREFYNVAKEVKEVTDYYKVPIIINDRLDIAQAIDASGVHLGQKDMHLNIAREILGKDKIIGISVGNVKEALQAQNNGADYLGIGTIFPTGSKKDVDAIIGIDGLSKIKDSISIPSVAIGGINKTNFKDVLKTGIEGISVISAILDEDDIKLAANNLLINK.

Residues 37–41 (QVREK) and Asn-69 contribute to the 4-amino-2-methyl-5-(diphosphooxymethyl)pyrimidine site. Mg(2+) contacts are provided by Asp-70 and Asp-89. Position 108 (Ser-108) interacts with 4-amino-2-methyl-5-(diphosphooxymethyl)pyrimidine. Position 134 to 136 (134 to 136 (TGS)) interacts with 2-[(2R,5Z)-2-carboxy-4-methylthiazol-5(2H)-ylidene]ethyl phosphate. 4-amino-2-methyl-5-(diphosphooxymethyl)pyrimidine is bound at residue Lys-137. 2-[(2R,5Z)-2-carboxy-4-methylthiazol-5(2H)-ylidene]ethyl phosphate contacts are provided by residues Gly-165 and 185–186 (IS).

It belongs to the thiamine-phosphate synthase family. Requires Mg(2+) as cofactor.

The enzyme catalyses 2-[(2R,5Z)-2-carboxy-4-methylthiazol-5(2H)-ylidene]ethyl phosphate + 4-amino-2-methyl-5-(diphosphooxymethyl)pyrimidine + 2 H(+) = thiamine phosphate + CO2 + diphosphate. The catalysed reaction is 2-(2-carboxy-4-methylthiazol-5-yl)ethyl phosphate + 4-amino-2-methyl-5-(diphosphooxymethyl)pyrimidine + 2 H(+) = thiamine phosphate + CO2 + diphosphate. It carries out the reaction 4-methyl-5-(2-phosphooxyethyl)-thiazole + 4-amino-2-methyl-5-(diphosphooxymethyl)pyrimidine + H(+) = thiamine phosphate + diphosphate. It participates in cofactor biosynthesis; thiamine diphosphate biosynthesis; thiamine phosphate from 4-amino-2-methyl-5-diphosphomethylpyrimidine and 4-methyl-5-(2-phosphoethyl)-thiazole: step 1/1. Functionally, condenses 4-methyl-5-(beta-hydroxyethyl)thiazole monophosphate (THZ-P) and 2-methyl-4-amino-5-hydroxymethyl pyrimidine pyrophosphate (HMP-PP) to form thiamine monophosphate (TMP). The polypeptide is Thiamine-phosphate synthase (Clostridium botulinum (strain ATCC 19397 / Type A)).